Consider the following 244-residue polypeptide: Phosphoadenosine 5'-phosphosulfate reductase (244 aa).

The active-site Nucleophile; cysteine thiosulfonate intermediate is C239.

This sequence belongs to the PAPS reductase family. CysH subfamily.

It localises to the cytoplasm. It carries out the reaction [thioredoxin]-disulfide + sulfite + adenosine 3',5'-bisphosphate + 2 H(+) = [thioredoxin]-dithiol + 3'-phosphoadenylyl sulfate. It functions in the pathway sulfur metabolism; hydrogen sulfide biosynthesis; sulfite from sulfate: step 3/3. In terms of biological role, catalyzes the formation of sulfite from phosphoadenosine 5'-phosphosulfate (PAPS) using thioredoxin as an electron donor. This Salmonella schwarzengrund (strain CVM19633) protein is Phosphoadenosine 5'-phosphosulfate reductase.